Here is a 158-residue protein sequence, read N- to C-terminus: Large ribosomal subunit protein uL13 (158 aa).

This sequence belongs to the universal ribosomal protein uL13 family. Part of the 50S ribosomal subunit.

Functionally, this protein is one of the early assembly proteins of the 50S ribosomal subunit, although it is not seen to bind rRNA by itself. It is important during the early stages of 50S assembly. The sequence is that of Large ribosomal subunit protein uL13 from Rickettsia canadensis (strain McKiel).